The following is a 348-amino-acid chain: Protein RecA (348 aa).

64-71 (GPESSGKT) is an ATP binding site. A compositionally biased stretch (basic and acidic residues) spans 325 to 335 (YEIDGASKEPL). The segment at 325-348 (YEIDGASKEPLEETEETLSLLDDE) is disordered. Positions 336–348 (EETEETLSLLDDE) are enriched in acidic residues.

Belongs to the RecA family.

The protein localises to the cytoplasm. Functionally, can catalyze the hydrolysis of ATP in the presence of single-stranded DNA, the ATP-dependent uptake of single-stranded DNA by duplex DNA, and the ATP-dependent hybridization of homologous single-stranded DNAs. It interacts with LexA causing its activation and leading to its autocatalytic cleavage. The protein is Protein RecA of Listeria seeligeri.